The following is a 1254-amino-acid chain: DNA-directed RNA polymerase subunit beta' (1254 aa).

Positions 59, 61, 76, and 79 each coordinate Zn(2+). Mg(2+) is bound by residues D501, D503, and D505. Zn(2+) contacts are provided by C871, C946, C953, and C956.

Belongs to the RNA polymerase beta' chain family. As to quaternary structure, the RNAP catalytic core consists of 2 alpha, 1 beta, 1 beta' and 1 omega subunit. When a sigma factor is associated with the core the holoenzyme is formed, which can initiate transcription. Requires Mg(2+) as cofactor. It depends on Zn(2+) as a cofactor.

It carries out the reaction RNA(n) + a ribonucleoside 5'-triphosphate = RNA(n+1) + diphosphate. DNA-dependent RNA polymerase catalyzes the transcription of DNA into RNA using the four ribonucleoside triphosphates as substrates. The protein is DNA-directed RNA polymerase subunit beta' of Mesoplasma florum (strain ATCC 33453 / NBRC 100688 / NCTC 11704 / L1) (Acholeplasma florum).